The following is a 745-amino-acid chain: Probable GMP synthase [glutamine-hydrolyzing] (745 aa).

Positions Met-1 to Met-37 are disordered. The Glutamine amidotransferase type-1 domain occupies Arg-60–Asn-252. Cys-138 functions as the For GATase activity in the catalytic mechanism. Residues His-226 and Glu-228 contribute to the active site. In terms of domain architecture, GMPS ATP-PPase spans Phe-253 to Arg-461. ATP is bound at residue Ser-280–Ala-286. Substrate is bound by residues Arg-363, Asp-563, Gln-662, Lys-737, and Glu-743.

As to quaternary structure, homodimer.

The catalysed reaction is XMP + L-glutamine + ATP + H2O = GMP + L-glutamate + AMP + diphosphate + 2 H(+). It participates in purine metabolism; GMP biosynthesis; GMP from XMP (L-Gln route): step 1/1. The sequence is that of Probable GMP synthase [glutamine-hydrolyzing] (gmps-1) from Caenorhabditis elegans.